A 501-amino-acid chain; its full sequence is MTDQVQLDENKLIAERRGKLDHIRQACKANGHPNDFRRDSLAADLQSEFGEKTKEELEELNHIVAIAGRVMAKRGPFLLIQEVSGKIQAYASKDVQKELKEKYQGLDIGDIIGVKGALHKSGKGDLYVNMEEFVLLTKALRPLPEKFHGLTDQEMRYRQRYVDLIVNEDSRTAFIIRSKVVSAIRNFMVDKGFMEVETPMMHVIPGGASARPFVTHHNALDVDMYLRVAPELYLKRLVVGGFERVFEINRNFRNEGLSPRHNPEFTMMEFYMAYADYNDLMDLTEAMLSQVAISVLGSDKMPYGEYTVDFGGKYARLSMLDAIKMYNPEHAEIQALTYDGVQDRDLMVSIAKSVHVEVESFWTCGQLLEEIFGETAEPKLMQPTFITEYPADISPLARRNDNNAFITDRFEFFIGGREVANGFSELNDAQDQDERFKAQVSAKESGDDEAMFYDADYITALEHGLPPTAGQGIGIDRLVMLFTNTHTIRDVILFPSMRPQA.

The Mg(2+) site is built by Glu-411 and Glu-418.

This sequence belongs to the class-II aminoacyl-tRNA synthetase family. As to quaternary structure, homodimer. Requires Mg(2+) as cofactor.

It is found in the cytoplasm. The enzyme catalyses tRNA(Lys) + L-lysine + ATP = L-lysyl-tRNA(Lys) + AMP + diphosphate. The chain is Lysine--tRNA ligase from Aliivibrio salmonicida (strain LFI1238) (Vibrio salmonicida (strain LFI1238)).